A 312-amino-acid polypeptide reads, in one-letter code: Probable deoxyhypusine synthase (312 aa).

Lys285 acts as the Nucleophile in catalysis.

Belongs to the deoxyhypusine synthase family. NAD(+) is required as a cofactor.

The catalysed reaction is [eIF5A protein]-L-lysine + spermidine = [eIF5A protein]-deoxyhypusine + propane-1,3-diamine. It participates in protein modification; eIF5A hypusination. Its function is as follows. Catalyzes the NAD-dependent oxidative cleavage of spermidine and the subsequent transfer of the butylamine moiety of spermidine to the epsilon-amino group of a specific lysine residue of the eIF-5A precursor protein to form the intermediate deoxyhypusine residue. This Saccharolobus islandicus (strain Y.N.15.51 / Yellowstone #2) (Sulfolobus islandicus) protein is Probable deoxyhypusine synthase.